The primary structure comprises 82 residues: Small ribosomal subunit protein uS17 (82 aa).

This sequence belongs to the universal ribosomal protein uS17 family. In terms of assembly, part of the 30S ribosomal subunit.

Its function is as follows. One of the primary rRNA binding proteins, it binds specifically to the 5'-end of 16S ribosomal RNA. The protein is Small ribosomal subunit protein uS17 of Shewanella sp. (strain MR-7).